Reading from the N-terminus, the 1124-residue chain is MSTTRPSQSSNNSGRSRNSARIIAQTTVDAKLHATFEESGSSFDYSSSVRVSGSVDGDQQPRSNKVTTAYLNHIQRGKQIQPFGCLLALDEKTCKVVAYSENAPEMLTMVSHAVPSVGDHPALGIGTDIRTVFTAPSASALQKALGFAEVSLLNPILVHCKTSGKPFYAIIHRVTGSLIIDFEPVKPYEVPMTAAGALQSYKLAAKAITRLQSLASGSMERLCDTMVQEVFELTGYDRVMAYKFHEDDHGEVIAEIAKPGLEPYLGLHYPATDIPQAARFLFMKNKVRMIVDCNAKHVKVLQDEKLPFDLTLCGSTLRAPHSCHLQYMANMDSIASLVMAVVVNDSDEDGDSADAVLPQKKKRLWGLVVCHNTTPRFVPFPLRYACEFLAQVFAIHVNKEIELEYQILEKNILRTQTLLCDMLMRDAPLGIVSQSPNIMDLVKCDGAALFYRNKLWLLGATPTESQLREIALWMSEYHTDSTGLSTDSLSDAGFPGALSLSDTVCGMAAVRITSKDIVFWFRSHTAAEIRWGGAKHEPGDQDDGRKMHPRSSFKAFLEVVKARSVPWKDFEMDAIHSLQLILRNASKDTDIIDLNTKAINTRLNDLKIEGMQELEAVTSEMVRLIETATVPILAVDVDGTVNGWNIKIAELTGLPVGEAIGKHLLTLVEDSSTDIVKKMLNLALQGEEEKNVQFEIKTHGDQVESGPISLIVNACASKDLRENVVGVCFVAQDITAQKTVMDKFTRIEGDYKAIVQNPNQLIPPIFGTDEFGWCCEWNAAMIKLTGWKREEVMDKMLLGEVFGTQMSCCRLKNQEAFVNFGIVLNKAMTGLETEKVPFGFFSRKGKYVECLLSVSKKIDAEGLVTGVFCFLQLASPELQQALHIQRLSEQTALKRLKVLTYMKRQIRNPLAGIVFSSKMLEGTDLETEQKRIVNTSSQCQRQLSKILDDSDLDGIIDGYLDLEMAEFTLHEVLVTSLSQVMNRSNTKGIRIANDVAEHIARETLYGDSLRLQQVLADFLLISINSTPNGGQVVIAASLTKEQLGKSVHLVNLELSITHGGSGVPEAALNQMFGNNVLESEEGISLHISRKLLKLMNGDVRYLKEAGKSSFILSVELAAAHKLKG.

Positions Met-1–Ser-19 are enriched in low complexity. The segment at Met-1 to Arg-21 is disordered. One can recognise a GAF domain in the interval Ser-218 to Ile-401. Residue Cys-323 participates in phytochromobilin binding. PAS domains are found at residues Val-617 to Glu-687 and Asp-750 to Gly-821. One can recognise a Histidine kinase domain in the interval Tyr-901 to His-1120.

Belongs to the phytochrome family. Homodimer. In terms of processing, contains one covalently linked phytochromobilin chromophore.

Functionally, regulatory photoreceptor which exists in two forms that are reversibly interconvertible by light: the Pr form that absorbs maximally in the red region of the spectrum and the Pfr form that absorbs maximally in the far-red region. Photoconversion of Pr to Pfr induces an array of morphogenic responses, whereas reconversion of Pfr to Pr cancels the induction of those responses. Pfr controls the expression of a number of nuclear genes including those encoding the small subunit of ribulose-bisphosphate carboxylase, chlorophyll A/B binding protein, protochlorophyllide reductase, rRNA, etc. It also controls the expression of its own gene(s) in a negative feedback fashion. The polypeptide is Phytochrome A (PHYA) (Pisum sativum (Garden pea)).